The chain runs to 342 residues: Cystein proteinase inhibitor protein salarin (342 aa).

A signal peptide spans 1–19 (MKSLVLLLLVAVTVSSVVS). Residue Asn-153 is glycosylated (N-linked (GlcNAc) asparagine). Residue Thr-184 is glycosylated (O-linked (GlcNAc) threonine).

In terms of processing, N-glycosylated, with sialylated biantennary complex-type glycans. Post-translationally, O-glycosylated, with sialylated oligosaccharides. In terms of tissue distribution, expressed in the skin, liver. intestine, spleen, pancreas and kidney.

The protein resides in the cytoplasm. The protein localises to the vacuole. In terms of biological role, inhibits papain and ficin (cysteine proteinases) but not trypsin (a serine proteinase). The chain is Cystein proteinase inhibitor protein salarin (salarin) from Salmo salar (Atlantic salmon).